A 773-amino-acid polypeptide reads, in one-letter code: Pentatricopeptide repeat-containing protein At1g76280 (773 aa).

11 PPR repeats span residues 130-165, 166-200, 201-231, 235-269, 332-369, 370-400, 402-436, 524-558, 559-593, 594-628, and 629-663; these read DSRS…RISP, LLPI…RVGK, NGIT…YVNH, DILS…ALRG, LRWS…NLKP, YDST…ISEC, YSYP…KLRP, GTPT…GCPA, DVAT…GFSP, KAVT…EIHL, and DVLS…KVNP.

Belongs to the PPR family. P subfamily.

This is Pentatricopeptide repeat-containing protein At1g76280 from Arabidopsis thaliana (Mouse-ear cress).